A 932-amino-acid chain; its full sequence is Beta-mannosidase A (932 aa).

The signal sequence occupies residues 1 to 19 (MRVPAQATIAVLASAVSSP). N-linked (GlcNAc...) asparagine glycosylation is found at asparagine 41, asparagine 81, asparagine 94, asparagine 249, asparagine 261, asparagine 284, asparagine 289, asparagine 318, and asparagine 348. The active-site Proton donor is glutamate 480. Asparagine 538, asparagine 551, asparagine 609, asparagine 624, asparagine 632, asparagine 659, asparagine 739, and asparagine 791 each carry an N-linked (GlcNAc...) asparagine glycan.

The protein belongs to the glycosyl hydrolase 2 family. Beta-mannosidase A subfamily. Homodimer.

It is found in the secreted. The enzyme catalyses Hydrolysis of terminal, non-reducing beta-D-mannose residues in beta-D-mannosides.. Its pathway is glycan metabolism; N-glycan degradation. Its function is as follows. Exoglycosidase that cleaves the single beta-linked mannose residue from the non-reducing end of beta-mannosidic oligosaccharides of various complexity and length. Involved in the degradation of polymeric mannan and galactomannan. The protein is Beta-mannosidase A (mndA) of Aspergillus terreus (strain NIH 2624 / FGSC A1156).